An 889-amino-acid polypeptide reads, in one-letter code: DNA mismatch repair protein MutS (889 aa).

ATP is bound at residue 641 to 648 (GPNMAGKS).

Belongs to the DNA mismatch repair MutS family.

Its function is as follows. This protein is involved in the repair of mismatches in DNA. It is possible that it carries out the mismatch recognition step. This protein has a weak ATPase activity. The chain is DNA mismatch repair protein MutS from Orientia tsutsugamushi (strain Ikeda) (Rickettsia tsutsugamushi).